A 555-amino-acid chain; its full sequence is Probable ferredoxin/ferredoxin--NADP reductase (555 aa).

2 consecutive 4Fe-4S ferredoxin-type domains span residues 2–29 and 37–66; these read PYII…PTPD and EMLY…SDTR. Residues Cys-9, Cys-15, Cys-19, Cys-46, Cys-49, Cys-52, and Cys-56 each contribute to the [4Fe-4S] cluster site. The ferredoxin--NADP reductase stretch occupies residues 115 to 555; sequence VAIVGSGPAA…APPLRLRALS (441 aa). Residues Ala-123, Glu-143, Leu-151, and Ile-187 each coordinate FAD. NADP(+) is bound by residues Arg-213, 258-261, 302-303, and Glu-314; these read NGNV and RR. FAD-binding positions include Trp-453 and 460–462; that span reads GFI. Position 460 (Gly-460) interacts with NADP(+).

It in the C-terminal section; belongs to the ferredoxin--NADP reductase family. Requires [4Fe-4S] cluster as cofactor. FAD serves as cofactor.

It carries out the reaction 2 reduced [2Fe-2S]-[ferredoxin] + NADP(+) + H(+) = 2 oxidized [2Fe-2S]-[ferredoxin] + NADPH. This is Probable ferredoxin/ferredoxin--NADP reductase (fprB) from Mycobacterium leprae (strain TN).